The sequence spans 421 residues: Serine hydroxymethyltransferase (421 aa).

Residues Leu118 and 122–124 (GHL) contribute to the (6S)-5,6,7,8-tetrahydrofolate site. Residue Lys226 is modified to N6-(pyridoxal phosphate)lysine. Glu242 provides a ligand contact to (6S)-5,6,7,8-tetrahydrofolate.

The protein belongs to the SHMT family. In terms of assembly, homodimer. It depends on pyridoxal 5'-phosphate as a cofactor.

The protein localises to the cytoplasm. It catalyses the reaction (6R)-5,10-methylene-5,6,7,8-tetrahydrofolate + glycine + H2O = (6S)-5,6,7,8-tetrahydrofolate + L-serine. Its pathway is one-carbon metabolism; tetrahydrofolate interconversion. It participates in amino-acid biosynthesis; glycine biosynthesis; glycine from L-serine: step 1/1. In terms of biological role, catalyzes the reversible interconversion of serine and glycine with tetrahydrofolate (THF) serving as the one-carbon carrier. This reaction serves as the major source of one-carbon groups required for the biosynthesis of purines, thymidylate, methionine, and other important biomolecules. Also exhibits THF-independent aldolase activity toward beta-hydroxyamino acids, producing glycine and aldehydes, via a retro-aldol mechanism. This is Serine hydroxymethyltransferase from Mycoplasmopsis synoviae (strain 53) (Mycoplasma synoviae).